The sequence spans 255 residues: Thiazole synthase (255 aa).

Lys-96 functions as the Schiff-base intermediate with DXP in the catalytic mechanism. 1-deoxy-D-xylulose 5-phosphate contacts are provided by residues Gly-157, 183 to 184, and 205 to 206; these read AG and NT.

Belongs to the ThiG family. In terms of assembly, homotetramer. Forms heterodimers with either ThiH or ThiS.

Its subcellular location is the cytoplasm. The enzyme catalyses [ThiS sulfur-carrier protein]-C-terminal-Gly-aminoethanethioate + 2-iminoacetate + 1-deoxy-D-xylulose 5-phosphate = [ThiS sulfur-carrier protein]-C-terminal Gly-Gly + 2-[(2R,5Z)-2-carboxy-4-methylthiazol-5(2H)-ylidene]ethyl phosphate + 2 H2O + H(+). It participates in cofactor biosynthesis; thiamine diphosphate biosynthesis. Functionally, catalyzes the rearrangement of 1-deoxy-D-xylulose 5-phosphate (DXP) to produce the thiazole phosphate moiety of thiamine. Sulfur is provided by the thiocarboxylate moiety of the carrier protein ThiS. In vitro, sulfur can be provided by H(2)S. The protein is Thiazole synthase of Heliobacterium modesticaldum (strain ATCC 51547 / Ice1).